The following is a 428-amino-acid chain: Putative G-protein coupled receptor F59B2.13 (428 aa).

Residues 1–30 are Extracellular-facing; the sequence is MSNNTTIPSKTATDICLTDRQMSLSVSSTE. N-linked (GlcNAc...) asparagine glycans are attached at residues asparagine 3 and asparagine 4. A helical transmembrane segment spans residues 31-51; the sequence is GVLIGTIIPILVLFGISGNIL. Topologically, residues 52–67 are cytoplasmic; the sequence is NLTVLLAPNLRTRSNQ. The helical transmembrane segment at 68–88 threads the bilayer; sequence LLACLAVADIVSLVVILPHSM. Residues 89-110 are Extracellular-facing; that stretch reads AHYETFETALWFRKFYGKYKFQ. The helical transmembrane segment at 111-131 threads the bilayer; that stretch reads IIAMTNWSIATATWLVFVICL. At 132 to 154 the chain is on the cytoplasmic side; it reads ERLIIIKYPLSVRKQAKFFTPRN. A helical membrane pass occupies residues 155–175; the sequence is VVTIIVVTTFILTSYNHVSHA. Residues 176 to 222 lie on the Extracellular side of the membrane; that stretch reads CAEKLFCNGTQYHVACLGIDSERWFRNEPNPNSEFMKSVVRVAPQVN. Asparagine 183 carries N-linked (GlcNAc...) asparagine glycosylation. A helical transmembrane segment spans residues 223–243; it reads AIFVVLIPVVLVIIFNVMLIL. The Cytoplasmic segment spans residues 244–278; sequence TLRQRTKLFEPSKTIRGDSQFTQLQSKTEHKVTIT. A helical membrane pass occupies residues 279–299; the sequence is VTAIVTCFTITQSPSAFVTFL. At 300–309 the chain is on the extracellular side; it reads SSYVHRDWVT. The helical transmembrane segment at 310-330 threads the bilayer; that stretch reads LSAICTILVVLGKALNFVLFC. The Cytoplasmic segment spans residues 331–428; the sequence is LSSASFRQRL…KEFRRGTSFV (98 aa).

This sequence belongs to the G-protein coupled receptor 1 family.

The protein resides in the cell membrane. The chain is Putative G-protein coupled receptor F59B2.13 from Caenorhabditis elegans.